We begin with the raw amino-acid sequence, 396 residues long: Elongation factor Tu (396 aa).

One can recognise a tr-type G domain in the interval 10–206 (KPHVNVGTIG…TMDSYIPEPV (197 aa)). Residues 19-26 (GHVDHGKT) form a G1 region. 19-26 (GHVDHGKT) contributes to the GTP binding site. A Mg(2+)-binding site is contributed by T26. Residues 60–64 (GITIS) form a G2 region. Positions 81-84 (DCPG) are G3. GTP is bound by residues 81 to 85 (DCPGH) and 136 to 139 (NKAD). The interval 136-139 (NKAD) is G4. Residues 174–176 (SAL) are G5.

This sequence belongs to the TRAFAC class translation factor GTPase superfamily. Classic translation factor GTPase family. EF-Tu/EF-1A subfamily. As to quaternary structure, monomer.

It localises to the cytoplasm. It carries out the reaction GTP + H2O = GDP + phosphate + H(+). In terms of biological role, GTP hydrolase that promotes the GTP-dependent binding of aminoacyl-tRNA to the A-site of ribosomes during protein biosynthesis. The chain is Elongation factor Tu from Legionella pneumophila (strain Lens).